The sequence spans 247 residues: 3-deoxy-manno-octulosonate cytidylyltransferase (247 aa).

This sequence belongs to the KdsB family.

The protein localises to the cytoplasm. It catalyses the reaction 3-deoxy-alpha-D-manno-oct-2-ulosonate + CTP = CMP-3-deoxy-beta-D-manno-octulosonate + diphosphate. Its pathway is nucleotide-sugar biosynthesis; CMP-3-deoxy-D-manno-octulosonate biosynthesis; CMP-3-deoxy-D-manno-octulosonate from 3-deoxy-D-manno-octulosonate and CTP: step 1/1. It functions in the pathway bacterial outer membrane biogenesis; lipopolysaccharide biosynthesis. In terms of biological role, activates KDO (a required 8-carbon sugar) for incorporation into bacterial lipopolysaccharide in Gram-negative bacteria. In Chlorobium phaeovibrioides (strain DSM 265 / 1930) (Prosthecochloris vibrioformis (strain DSM 265)), this protein is 3-deoxy-manno-octulosonate cytidylyltransferase.